A 338-amino-acid polypeptide reads, in one-letter code: DNA-directed RNA polymerase subunit alpha (338 aa).

An alpha N-terminal domain (alpha-NTD) region spans residues 1–234; that stretch reads MIQKNWQELI…DQLEIFVNFE (234 aa). An alpha C-terminal domain (alpha-CTD) region spans residues 250 to 338; it reads FSPALLKKVD…ELAKRFEEHY (89 aa).

It belongs to the RNA polymerase alpha chain family. Homodimer. The RNAP catalytic core consists of 2 alpha, 1 beta, 1 beta' and 1 omega subunit. When a sigma factor is associated with the core the holoenzyme is formed, which can initiate transcription.

The enzyme catalyses RNA(n) + a ribonucleoside 5'-triphosphate = RNA(n+1) + diphosphate. Its function is as follows. DNA-dependent RNA polymerase catalyzes the transcription of DNA into RNA using the four ribonucleoside triphosphates as substrates. In Xanthobacter autotrophicus (strain ATCC BAA-1158 / Py2), this protein is DNA-directed RNA polymerase subunit alpha.